The following is a 128-amino-acid chain: SSSEDKVTVNFINRDGETLTTKGKVGDSLLDVVVENNLDIDGFGACEGTLACSTCHLIFEQHIYEKLEAITDEENDMLDLAYGLTDRSRLGCQICLTKAMDNMTVRVPDAVSDARESIDMGMNSSKIE.

Ser-3 is modified (phosphoserine). Lys-6 carries the post-translational modification N6-acetyllysine; alternate. Residue Lys-6 is modified to N6-succinyllysine; alternate. The 2Fe-2S ferredoxin-type domain occupies 7–111; sequence VTVNFINRDG…NMTVRVPDAV (105 aa). Positions 46, 52, 55, and 92 each coordinate [2Fe-2S] cluster. Lys-98 is modified (N6-succinyllysine). Ser-117 carries the phosphoserine modification.

Belongs to the adrenodoxin/putidaredoxin family. Interacts with CYP11A1. It depends on [2Fe-2S] cluster as a cofactor.

Its subcellular location is the mitochondrion matrix. Its function is as follows. Essential for the synthesis of various steroid hormones. Participates in the reduction of mitochondrial cytochrome P450 for steroidogenesis. Transfers electrons from adrenodoxin reductase to CYP11A1, a cytochrome P450 that catalyzes cholesterol side-chain cleavage. Does not form a ternary complex with adrenodoxin reductase and CYP11A1 but shuttles between the two enzymes to transfer electrons. This Ovis aries (Sheep) protein is Adrenodoxin (FDX1).